The primary structure comprises 1392 residues: DNA-directed RNA polymerase subunit beta'' (1392 aa).

Positions 224, 295, 302, and 305 each coordinate Zn(2+).

It belongs to the RNA polymerase beta' chain family. RpoC2 subfamily. In plastids the minimal PEP RNA polymerase catalytic core is composed of four subunits: alpha, beta, beta', and beta''. When a (nuclear-encoded) sigma factor is associated with the core the holoenzyme is formed, which can initiate transcription. It depends on Zn(2+) as a cofactor.

The protein localises to the plastid. The protein resides in the chloroplast. It carries out the reaction RNA(n) + a ribonucleoside 5'-triphosphate = RNA(n+1) + diphosphate. In terms of biological role, DNA-dependent RNA polymerase catalyzes the transcription of DNA into RNA using the four ribonucleoside triphosphates as substrates. This chain is DNA-directed RNA polymerase subunit beta'', found in Solanum tuberosum (Potato).